We begin with the raw amino-acid sequence, 157 residues long: uncharacterized protein (157 aa).

This is an uncharacterized protein from Caenorhabditis elegans.